We begin with the raw amino-acid sequence, 319 residues long: Acetyl esterase (319 aa).

An Involved in the stabilization of the negatively charged intermediate by the formation of the oxyanion hole motif is present at residues 91–93 (HGG). Residues Ser-165, Asp-262, and His-292 contribute to the active site.

This sequence belongs to the 'GDXG' lipolytic enzyme family. Homodimer. Interacts with MalT and MelA.

The protein resides in the cytoplasm. Its function is as follows. Displays esterase activity towards short chain fatty esters (acyl chain length of up to 8 carbons). Able to hydrolyze triacetylglycerol (triacetin) and tributyrylglycerol (tributyrin), but not trioleylglycerol (triolein) or cholesterol oleate. Negatively regulates MalT activity by antagonizing maltotriose binding. Inhibits MelA galactosidase activity. The sequence is that of Acetyl esterase from Escherichia coli (strain 55989 / EAEC).